Here is a 227-residue protein sequence, read N- to C-terminus: MMAAGAAVALALWLLLPAVGVGEAGPPPIQDGEFTFLLPAGRKQCFYQSAPANASLETEYQVIGGAGLDVDFTLESPQGVLLVSESRKADGVHTVEPTEAGDYRLCFDNSFSTISEKLVFFELIFDSFQDEEEVEGWAEAVEPEEMLDVKMEDIKESIETMRTRLERSIQMLTLLRAFEARDRNLQEDNLERVNFWSAANVAVLLLVAVLQVCTLKRFFHDKRPVPT.

Positions 1–24 (MMAAGAAVALALWLLLPAVGVGEA) are cleaved as a signal peptide. The Extracellular portion of the chain corresponds to 25–194 (GPPPIQDGEF…LQEDNLERVN (170 aa)). The GOLD domain maps to 43–125 (KQCFYQSAPA…EKLVFFELIF (83 aa)). The stretch at 145–170 (EMLDVKMEDIKESIETMRTRLERSIQ) forms a coiled coil. A helical membrane pass occupies residues 195–215 (FWSAANVAVLLLVAVLQVCTL). Topologically, residues 216–227 (KRFFHDKRPVPT) are cytoplasmic. Residues 218–219 (FF) carry the COPII vesicle coat-binding motif. A COPI vesicle coat-binding motif is present at residues 218 to 227 (FFHDKRPVPT).

Belongs to the EMP24/GP25L family. Homodimer in endoplasmic reticulum, endoplasmic reticulum-Golgi intermediate compartment and cis-Golgi network. Interacts with IL1RL1. Interacts with RNF26; this interaction is important to modulate innate immune signaling through the cGAS-STING pathway. In terms of tissue distribution, widely expressed.

It localises to the cell membrane. The protein resides in the endoplasmic reticulum membrane. It is found in the golgi apparatus. Its subcellular location is the cis-Golgi network membrane. The protein localises to the endoplasmic reticulum-Golgi intermediate compartment membrane. In terms of biological role, potential role in vesicular protein trafficking, mainly in the early secretory pathway. May act as a cargo receptor at the lumenal side for incorporation of secretory cargo molecules into transport vesicles and may be involved in vesicle coat formation at the cytoplasmic side. Plays a positive role in IL-33-mediated IL-8 and IL-6 production by interacting with interleukin-33 receptor IL1RL1. Plays also a role in the modulation of innate immune signaling through the cGAS-STING pathway by interacting with RNF26. This chain is Transmembrane emp24 domain-containing protein 1 (Tmed1), found in Mus musculus (Mouse).